The primary structure comprises 96 residues: MSSDEWSAAEDEGQLSRLLRKSRDSPFVPVGMAGFVAVLSYGLYKLNSRREQKMSLHLIHVRVAAQGCVVGAVTLGVLYSMYKDYIRPRFFNVPKK.

At 1–26 (MSSDEWSAAEDEGQLSRLLRKSRDSP) the chain is on the cytoplasmic side. Residues 1–91 (MSSDEWSAAE…YKDYIRPRFF (91 aa)) form the HIG1 domain. A helical membrane pass occupies residues 27 to 44 (FVPVGMAGFVAVLSYGLY). Residues 45-58 (KLNSRREQKMSLHL) are Extracellular-facing. A helical transmembrane segment spans residues 59-81 (IHVRVAAQGCVVGAVTLGVLYSM). Topologically, residues 82–96 (YKDYIRPRFFNVPKK) are cytoplasmic.

It localises to the membrane. The polypeptide is HIG1 domain family member 1C (Higd1c) (Mus musculus (Mouse)).